Consider the following 1182-residue polypeptide: MGQQVGRVGEAPGLQQPQPRGIRGSSAARPSGRRRDPAGRTADAGFNVFTQHDHFASCVEDGFEGDKTGGSSPEVLHRPFGCDAESQALNEAIRWSSKENLLGATESDPNLFVALYDFVASGDNTLSITKGEKLRVLGYNQNGEWSEVRSKNGQGWVPSNYITPVNSLEKHSWYHGPVSRSAAEYLLSSLINGSFLVRESESSPGQLSISLRYEGRVYHYRINTTTDSKVYVTAESRFSTLAELVHHHSTVADGLVTTLHYPAPKCNKPTVYGVSPIHDKWEMERTDITMKHKLGGGQYGEVYVGVWKKYSLTVAVKTFKEDTMEVEEFLKEAAVMKEIKHPNLVQLLGVCTLEPPFYIVTEYMPYGNLLDYLRECSREEVTAVVLLYMATQISSAMEYLEKKNFIHRDLAARNCLVGENHVVKVADFGLSRLMTGDTYTAHAGAKFPIKWTAPESLAYNTFSIKSDVWAFGVLLWEIATYGMSPYPGIDLSQVYDLLEKGYRMEQPEGCPPKVYELMRACWKWSPADRPSFAETHQAFETMFHDSSISEEVAEELGRTASSSSVVPYLPRLPLLPSKTRTLRKQGENKENLDGGLDAAESLASSSAPAGFIRSTQASSGSPALPRKQRDKSPSSLLEDAKETCFTRDRKGGFFSSFMKKRNAPTPPKRSSSFREMENQPHKKYELTGNFSPVASLQNADGFSVAPSQQEPNLVPAKCYGGSFAQRNLCADDDSGGGGGSGTAGGGWSGITGFFTPRLIKKTLGLRAGKPTASDDTSKPFPRSNSTSSMSSGLPEQDRMAMTLPRNCQRSKLQLERTVSTSSQPEENVDRANDMLPKKSEEGAAPARERPKAKLLPRGATALPLRAPDPAITESDSPGVGVAGVAAAPKGKERNGGTRLGVAGVPEDGEQLGWSSPAKAVAVLPTTHNHKVPVLISPTLKHTPADVQLIGTDSQGNKFKLLSEHQVTSSGDKDRPRRVKPKCAPPPPPVMRLLQHPSTCSDPEEEPTAPPAGQHTPETQEGGKKAAPGPVPSSGKPGRPVMPPPQVPLPTSSISPAKMANGTAGTKVALRKTKQAAEKISADKISKEALLECADLLSSAITEPVPNSQLVDTGHQLLDYCSGYVDSIPQTRNKFAFREAVSKLELSLQELQVSSTAAGVPGTNPVLNNLLSCVQEISDVVQR.

The interval 1–42 (MGQQVGRVGEAPGLQQPQPRGIRGSSAARPSGRRRDPAGRTA) is disordered. Residue glycine 2 is the site of N-myristoyl glycine attachment. A CAP region spans residues 2–106 (GQQVGRVGEA…SKENLLGATE (105 aa)). Residues 20 to 30 (RGIRGSSAARP) show a composition bias toward low complexity. Serine 97 carries the phosphoserine modification. The SH3 domain maps to 107–167 (SDPNLFVALY…PSNYITPVNS (61 aa)). Phosphotyrosine occurs at positions 116, 161, 174, 185, 218, and 231. In terms of domain architecture, SH2 spans 173–263 (WYHGPVSRSA…GLVTTLHYPA (91 aa)). Tyrosine 261 carries the phosphotyrosine; by ABL1 and autocatalysis modification. The residue at position 272 (tyrosine 272) is a Phosphotyrosine; by autocatalysis. A Phosphoserine modification is found at serine 275. One can recognise a Protein kinase domain in the interval 288-539 (ITMKHKLGGG…PSFAETHQAF (252 aa)). 294 to 302 (LGGGQYGEV) is an ATP binding site. Phosphotyrosine occurs at positions 299 and 303. ATP contacts are provided by residues lysine 317 and 362 to 368 (EYMPYGN). Aspartate 409 functions as the Proton acceptor in the catalytic mechanism. Positions 427-451 (DFGLSRLMTGDTYTAHAGAKFPIKW) match the Kinase activation loop motif. Position 439 is a phosphotyrosine; by autocatalysis and SRC-type Tyr-kinases (tyrosine 439). Phosphotyrosine is present on tyrosine 459. Tyrosine 568 bears the Phosphotyrosine; by autocatalysis mark. Serine 606, serine 621, serine 632, serine 634, and serine 656 each carry phosphoserine. Disordered stretches follow at residues 612–642 (IRST…DAKE) and 655–674 (SSFM…SSFR). The Nuclear localization signal signature appears at 659 to 661 (KKR). 3 positions are modified to phosphoserine: serine 670, serine 671, and serine 672. Tyrosine 684 carries the phosphotyrosine; by autocatalysis modification. An F-actin-binding region spans residues 695–930 (SLQNADGFSV…AVLPTTHNHK (236 aa)). Tyrosine 719 is subject to Phosphotyrosine. The disordered stretch occupies residues 765 to 796 (LRAGKPTASDDTSKPFPRSNSTSSMSSGLPEQ). Lysine 778 is subject to N6-acetyllysine. The segment covering 782-793 (RSNSTSSMSSGL) has biased composition (polar residues). Serine 785 carries the phosphoserine modification. Threonine 802 carries the post-translational modification Phosphothreonine. Residues 809–825 (RSKLQLERTVSTSSQPE) are compositionally biased toward polar residues. The tract at residues 809–858 (RSKLQLERTVSTSSQPEENVDRANDMLPKKSEEGAAPARERPKAKLLPRG) is disordered. Serine 819 and serine 822 each carry phosphoserine. The segment covering 827–851 (NVDRANDMLPKKSEEGAAPARERPK) has biased composition (basic and acidic residues). A phosphoserine mark is found at serine 915 and serine 936. The disordered stretch occupies residues 964–1059 (HQVTSSGDKD…TSSISPAKMA (96 aa)). The interval 1020-1182 (EGGKKAAPGP…VQEISDVVQR (163 aa)) is F-actin-binding.

The protein belongs to the protein kinase superfamily. Tyr protein kinase family. ABL subfamily. Interacts with PSMA7. Interacts with CTTN. Found in a complex with ABL1, ABL2, CRK and UNC119; leading to the inhibition of CRK phosphorylation by ABL kinases. Mg(2+) serves as cofactor. It depends on Mn(2+) as a cofactor. Phosphorylated at Tyr-261 by ABL1 in response to oxidative stress. Phosphorylated by PDGFRB. In terms of processing, polyubiquitinated. Polyubiquitination of ABL2 leads to degradation. In terms of tissue distribution, most abundant in adult mouse brain, especially in synapse-rich regions.

It localises to the cytoplasm. It is found in the cytoskeleton. It carries out the reaction L-tyrosyl-[protein] + ATP = O-phospho-L-tyrosyl-[protein] + ADP + H(+). Its activity is regulated as follows. Stabilized in the inactive form by an association between the SH3 domain and the SH2-TK linker region, interactions of the N-terminal cap, and contributions from an N-terminal myristoyl group and phospholipids. Activated by autophosphorylation as well as by SRC-family kinase-mediated phosphorylation. Activated by RIN1 binding to the SH2 and SH3 domains. Inhibited by imatinib mesylate (Gleevec). Phosphatidylinositol 4,5-bisphosphate (PIP2), a highly abundant phosphoinositide known to regulate cytoskeletal and membrane proteins, inhibits the tyrosine kinase activity. Its function is as follows. Non-receptor tyrosine-protein kinase that plays an ABL1-overlapping role in key processes linked to cell growth and survival such as cytoskeleton remodeling in response to extracellular stimuli, cell motility and adhesion, receptor endocytosis, autophagy, DNA damage response and apoptosis. Coordinates actin remodeling through tyrosine phosphorylation of proteins controlling cytoskeleton dynamics like MYH10 (involved in movement); CTTN (involved in signaling); or TUBA1 and TUBB (microtubule subunits). Binds directly F-actin and regulates actin cytoskeletal structure through its F-actin-bundling activity. Involved in the regulation of cell adhesion and motility through phosphorylation of key regulators of these processes such as CRK, CRKL or DOK1. Required for adhesion-dependent phosphorylation of ARHGAP35 which promotes its association with RASA1, resulting in recruitment of ARHGAP35 to the cell periphery where it inhibits RHO. Phosphorylates multiple receptor tyrosine kinases like PDGFRB and other substrates which are involved in endocytosis regulation such as RIN1. In brain, may regulate neurotransmission by phosphorylating proteins at the synapse. Finally, functions as its own regulator through autocatalytic activity as well as through phosphorylation of its inhibitor, ABI1. Positively regulates chemokine-mediated T-cell migration, polarization, and homing to lymph nodes and immune-challenged tissues, potentially via activation of NEDD9/HEF1 and RAP1. The polypeptide is Tyrosine-protein kinase ABL2 (Mus musculus (Mouse)).